Consider the following 201-residue polypeptide: Charged multivesicular body protein 6 (201 aa).

A lipid anchor (N-myristoyl glycine) is attached at Gly2. The stretch at 10–145 (QSRVTEQDKA…YQRQIDELLA (136 aa)) forms a coiled coil. Ser119 carries the post-translational modification Phosphoserine. The residue at position 130 (Thr130) is a Phosphothreonine. A Type-2 MIT-interacting motif motif is present at residues 168–179 (IELPEVPSEPLP). The interval 170-181 (LPEVPSEPLPEK) is interaction with VPS4A.

It belongs to the SNF7 family. In terms of assembly, probable core component of the endosomal sorting required for transport complex III (ESCRT-III). ESCRT-III components are thought to multimerize to form a flat lattice on the perimeter membrane of the endosome. Several assembly forms of ESCRT-III may exist that interact and act sequentially. Interacts with VPS4A; the interaction is direct. Interacts with VPS4B; the interaction is direct. Interacts with CHMP4A, CHMP4B and CHMP4C. Interacts with SNF8, VPS25 and VPS36. In terms of processing, ISGylated in a CHMP5-dependent manner. Isgylation weakens its interaction with VPS4A. As to expression, ubiquitously expressed.

The protein localises to the endomembrane system. Its subcellular location is the endosome membrane. It is found in the late endosome membrane. It localises to the membrane. Probable core component of the endosomal sorting required for transport complex III (ESCRT-III) which is involved in multivesicular bodies (MVBs) formation and sorting of endosomal cargo proteins into MVBs. MVBs contain intraluminal vesicles (ILVs) that are generated by invagination and scission from the limiting membrane of the endosome and mostly are delivered to lysosomes enabling degradation of membrane proteins, such as stimulated growth factor receptors, lysosomal enzymes and lipids. The MVB pathway appears to require the sequential function of ESCRT-O, -I,-II and -III complexes. ESCRT-III proteins mostly dissociate from the invaginating membrane before the ILV is released. The ESCRT machinery also functions in topologically equivalent membrane fission events, such as the terminal stages of cytokinesis and the budding of enveloped viruses (HIV-1 and other lentiviruses). ESCRT-III proteins are believed to mediate the necessary vesicle extrusion and/or membrane fission activities, possibly in conjunction with the AAA ATPase VPS4. In the ESCRT-III complex, it probably serves as an acceptor for the ESCRT-II complex on endosomal membranes. The polypeptide is Charged multivesicular body protein 6 (CHMP6) (Homo sapiens (Human)).